The chain runs to 526 residues: Estrogen receptor beta (526 aa).

Positions 1-145 (MDIKNSPSNL…SPSSKRDAHF (145 aa)) are modulating. Phosphoserine; by MAPK is present on residues serine 84 and serine 102. 2 consecutive NR C4-type zinc fingers follow at residues 146–166 (CAVCSDYASGYHYGVWSCEGC) and 182–206 (CPATNQCTIDKNRRKSCQACRLRKC). A DNA-binding region (nuclear receptor) is located at residues 146–211 (CAVCSDYASG…RLRKCYEVGM (66 aa)). The 234-residue stretch at 261–494 (SPEQLVLTLL…DLLLEMLNAH (234 aa)) folds into the NR LBD domain. The interval 502-526 (LVTGSERSRMEESESKEGSQKPQAQ) is disordered. A compositionally biased stretch (basic and acidic residues) spans 507–520 (ERSRMEESESKEGS).

Belongs to the nuclear hormone receptor family. NR3 subfamily. As to quaternary structure, binds DNA as a homodimer. Can form a heterodimer with ESR1. Interacts with NCOA1, NCOA3, NCOA5 and NCOA6 coactivators, leading to a strong increase of transcription of target genes. Interacts with UBE1C and AKAP13. Interacts with DNTTIP2. Interacts with CCDC62 in the presence of estradiol/E2; this interaction seems to enhance the transcription of target genes. Interacts with DNAAF4. Interacts with PRMT2. Interacts with CCAR2 (via N-terminus) in a ligand-independent manner. Interacts with RBM39, in the presence of estradiol (E2). Interacts with STUB1/CHIP. In terms of processing, phosphorylation at Ser-84 and Ser-102 recruits NCOA1.

It localises to the nucleus. Functionally, nuclear hormone receptor. Binds estrogens with an affinity similar to that of ESR1/ER-alpha, and activates expression of reporter genes containing estrogen response elements (ERE) in an estrogen-dependent manner. The polypeptide is Estrogen receptor beta (ESR2) (Sus scrofa (Pig)).